The following is a 398-amino-acid chain: Immunoglobulin heavy constant gamma 2A (398 aa).

Ig-like domains are found at residues proline 5–glutamate 97, proline 120–serine 219, and proline 228–serine 324. Cystine bridges form between cysteine 26-cysteine 81, cysteine 143-cysteine 203, and cysteine 249-cysteine 307. An N-linked (GlcNAc...) asparagine glycan is attached at asparagine 179. Residues glycine 345–cysteine 362 traverse the membrane as a helical segment. Residues tyrosine 363 to alanine 398 are Cytoplasmic-facing.

The protein localises to the cell membrane. The polypeptide is Immunoglobulin heavy constant gamma 2A (Mus musculus (Mouse)).